A 59-amino-acid chain; its full sequence is Small ribosomal subunit protein bS21 (59 aa).

A disordered region spans residues Glu36 to Phe59. Residues Val43 to Phe59 show a composition bias toward basic residues.

Belongs to the bacterial ribosomal protein bS21 family.

The polypeptide is Small ribosomal subunit protein bS21 (Alkaliphilus oremlandii (strain OhILAs) (Clostridium oremlandii (strain OhILAs))).